Reading from the N-terminus, the 459-residue chain is Bifunctional protein GlmU (459 aa).

The pyrophosphorylase stretch occupies residues 1 to 230 (MSNRFAVILA…FDETLGVNDR (230 aa)). Residues 9–12 (LAAG), Lys23, Gln73, and 78–79 (GT) contribute to the UDP-N-acetyl-alpha-D-glucosamine site. Asp103 contacts Mg(2+). Residues Gly140, Glu155, Asn170, and Asn228 each coordinate UDP-N-acetyl-alpha-D-glucosamine. Mg(2+) is bound at residue Asn228. The tract at residues 231–251 (VALSQAEIIMKNRINRKNMVN) is linker. Residues 252 to 459 (GVTIIDPSNT…VDQLLNKKKS (208 aa)) form an N-acetyltransferase region. UDP-N-acetyl-alpha-D-glucosamine is bound by residues Arg333 and Lys351. His363 (proton acceptor) is an active-site residue. Positions 366 and 377 each coordinate UDP-N-acetyl-alpha-D-glucosamine. Acetyl-CoA-binding positions include 386–387 (NY), Ala423, and Arg440.

This sequence in the N-terminal section; belongs to the N-acetylglucosamine-1-phosphate uridyltransferase family. It in the C-terminal section; belongs to the transferase hexapeptide repeat family. Homotrimer. It depends on Mg(2+) as a cofactor.

Its subcellular location is the cytoplasm. The enzyme catalyses alpha-D-glucosamine 1-phosphate + acetyl-CoA = N-acetyl-alpha-D-glucosamine 1-phosphate + CoA + H(+). The catalysed reaction is N-acetyl-alpha-D-glucosamine 1-phosphate + UTP + H(+) = UDP-N-acetyl-alpha-D-glucosamine + diphosphate. Its pathway is nucleotide-sugar biosynthesis; UDP-N-acetyl-alpha-D-glucosamine biosynthesis; N-acetyl-alpha-D-glucosamine 1-phosphate from alpha-D-glucosamine 6-phosphate (route II): step 2/2. It participates in nucleotide-sugar biosynthesis; UDP-N-acetyl-alpha-D-glucosamine biosynthesis; UDP-N-acetyl-alpha-D-glucosamine from N-acetyl-alpha-D-glucosamine 1-phosphate: step 1/1. It functions in the pathway bacterial outer membrane biogenesis; LPS lipid A biosynthesis. Its function is as follows. Catalyzes the last two sequential reactions in the de novo biosynthetic pathway for UDP-N-acetylglucosamine (UDP-GlcNAc). The C-terminal domain catalyzes the transfer of acetyl group from acetyl coenzyme A to glucosamine-1-phosphate (GlcN-1-P) to produce N-acetylglucosamine-1-phosphate (GlcNAc-1-P), which is converted into UDP-GlcNAc by the transfer of uridine 5-monophosphate (from uridine 5-triphosphate), a reaction catalyzed by the N-terminal domain. This Bacillus anthracis (strain A0248) protein is Bifunctional protein GlmU.